We begin with the raw amino-acid sequence, 634 residues long: 1,4-alpha-glucan branching enzyme GlgB (634 aa).

Asp-305 serves as the catalytic Nucleophile. Catalysis depends on Glu-357, which acts as the Proton donor.

It belongs to the glycosyl hydrolase 13 family. GlgB subfamily. In terms of assembly, monomer.

The enzyme catalyses Transfers a segment of a (1-&gt;4)-alpha-D-glucan chain to a primary hydroxy group in a similar glucan chain.. It participates in glycan biosynthesis; glycogen biosynthesis. In terms of biological role, catalyzes the formation of the alpha-1,6-glucosidic linkages in glycogen by scission of a 1,4-alpha-linked oligosaccharide from growing alpha-1,4-glucan chains and the subsequent attachment of the oligosaccharide to the alpha-1,6 position. The protein is 1,4-alpha-glucan branching enzyme GlgB of Lactiplantibacillus plantarum (strain ATCC BAA-793 / NCIMB 8826 / WCFS1) (Lactobacillus plantarum).